A 427-amino-acid chain; its full sequence is Light-independent protochlorophyllide reductase subunit N (427 aa).

The [4Fe-4S] cluster site is built by cysteine 30, cysteine 55, and cysteine 116.

Belongs to the BchN/ChlN family. As to quaternary structure, protochlorophyllide reductase is composed of three subunits; BchL, BchN and BchB. Forms a heterotetramer of two BchB and two BchN subunits. It depends on [4Fe-4S] cluster as a cofactor.

The catalysed reaction is chlorophyllide a + oxidized 2[4Fe-4S]-[ferredoxin] + 2 ADP + 2 phosphate = protochlorophyllide a + reduced 2[4Fe-4S]-[ferredoxin] + 2 ATP + 2 H2O. Its pathway is porphyrin-containing compound metabolism; bacteriochlorophyll biosynthesis (light-independent). In terms of biological role, component of the dark-operative protochlorophyllide reductase (DPOR) that uses Mg-ATP and reduced ferredoxin to reduce ring D of protochlorophyllide (Pchlide) to form chlorophyllide a (Chlide). This reaction is light-independent. The NB-protein (BchN-BchB) is the catalytic component of the complex. This is Light-independent protochlorophyllide reductase subunit N from Rhodopseudomonas palustris (strain BisA53).